Consider the following 186-residue polypeptide: Ribulose bisphosphate carboxylase small subunit, chloroplastic 6 (186 aa).

The N-terminal 60 residues, methionine 1–glutamine 60, are a transit peptide targeting the chloroplast.

It belongs to the RuBisCO small chain family. Heterohexadecamer of 8 large and 8 small subunits.

Its subcellular location is the plastid. It is found in the chloroplast. Its function is as follows. RuBisCO catalyzes two reactions: the carboxylation of D-ribulose 1,5-bisphosphate, the primary event in carbon dioxide fixation, as well as the oxidative fragmentation of the pentose substrate. Both reactions occur simultaneously and in competition at the same active site. Although the small subunit is not catalytic it is essential for maximal activity. This chain is Ribulose bisphosphate carboxylase small subunit, chloroplastic 6, found in Mesembryanthemum crystallinum (Common ice plant).